The following is a 102-amino-acid chain: Large ribosomal subunit protein bL28 (102 aa).

This sequence belongs to the bacterial ribosomal protein bL28 family.

In Bradyrhizobium diazoefficiens (strain JCM 10833 / BCRC 13528 / IAM 13628 / NBRC 14792 / USDA 110), this protein is Large ribosomal subunit protein bL28.